The sequence spans 466 residues: 3-isopropylmalate dehydratase large subunit (466 aa).

[4Fe-4S] cluster-binding residues include C347, C407, and C410.

This sequence belongs to the aconitase/IPM isomerase family. LeuC type 1 subfamily. In terms of assembly, heterodimer of LeuC and LeuD. [4Fe-4S] cluster is required as a cofactor.

The catalysed reaction is (2R,3S)-3-isopropylmalate = (2S)-2-isopropylmalate. Its pathway is amino-acid biosynthesis; L-leucine biosynthesis; L-leucine from 3-methyl-2-oxobutanoate: step 2/4. Its function is as follows. Catalyzes the isomerization between 2-isopropylmalate and 3-isopropylmalate, via the formation of 2-isopropylmaleate. This is 3-isopropylmalate dehydratase large subunit from Cronobacter sakazakii (strain ATCC BAA-894) (Enterobacter sakazakii).